The chain runs to 545 residues: Acetyltransferase BOT5 (545 aa).

The signal sequence occupies residues 1–19 (MATIPLFFSLILFLRLYHA). N-linked (GlcNAc...) asparagine glycosylation is found at Asn70 and Asn198. Residue His208 is the Proton acceptor of the active site. N-linked (GlcNAc...) asparagine glycosylation is found at Asn346 and Asn445. The disordered stretch occupies residues 466-493 (GAGNQKSSSTRKAARHTEPTQAQTQPGR).

This sequence belongs to the plant acyltransferase family.

It participates in secondary metabolite biosynthesis. Acetyltransferase; part of the gene cluster that mediates the biosynthesis of botrydial. Botrydial is necessary for colonization of plant tissue by the T4 strain. It is a strain-dependent virulence factor since highly aggressive strains like SAS56 or B05 still retain substantial virulence when botrydial synthesis is impaired, since they produce also botcinic acid. The first step of botrydial biosynthesis is performed by the sesquiterpene synthase BOT2 which catalyzes the cyclization of farnesyl diphosphate (FPP) to presilphiperfolan-8-beta-ol (PSP). The cytochrome P450 monooxygenase BOT4 then catalyzes the hydroxylation at C-4 to give a probotryane intermediate. Acetylation of the hydroxyl at C-4 is carried out by the acetyltransferase BOT5, followed by the combined action of the P450 monooxygenases BOT3 and BOT1, to yield finally the glycol, via the regio- and stereospecific hydroxylations at C-10 and C-15 of the probotryane intermediates, respectively. The cleavage of the C10-C15 bond of probotryane skeleton is an intriguing and chemically important reaction, which could be mediated by some of the monooxygenases or by a combination of them. It is possible that either BOT3 or BOT1 would oxidize either the 10- or the 15-hydroxy group to the hydroperoxide derivative, which would then undergo heterolytic fragmentation to give the dialdehyde botrydial. Finally, the dehydrogenase BOT7 might be involved in the conversion of botrydial to dihydrobotrydial. This is Acetyltransferase BOT5 from Botryotinia fuckeliana (Noble rot fungus).